Reading from the N-terminus, the 201-residue chain is uncharacterized protein (201 aa).

4 helical membrane passes run 9–29 (YNVF…ILVA), 42–62 (FLFV…FFDV), 86–106 (SGVI…VVMV), and 126–146 (LPYL…SIGM). Basic and acidic residues-rich tracts occupy residues 165-174 (EPTDPNKTDN) and 182-191 (DENKKNEKEQ). The segment at 165-201 (EPTDPNKTDNRAVVINLDENKKNEKEQSPPSAEMTSL) is disordered. Residues 192–201 (SPPSAEMTSL) are compositionally biased toward polar residues.

The protein resides in the cell membrane. This is an uncharacterized protein from Mycoplasma genitalium (strain ATCC 33530 / DSM 19775 / NCTC 10195 / G37) (Mycoplasmoides genitalium).